Reading from the N-terminus, the 245-residue chain is Uridylate kinase (245 aa).

Residue 12–15 (KISG) participates in ATP binding. Residue glycine 55 participates in UMP binding. Residues glycine 56 and arginine 60 each coordinate ATP. UMP contacts are provided by residues aspartate 76 and 137 to 144 (AGAPYLTT). Residues threonine 164, tyrosine 171, and aspartate 174 each coordinate ATP.

This sequence belongs to the UMP kinase family. In terms of assembly, homohexamer.

The protein resides in the cytoplasm. It carries out the reaction UMP + ATP = UDP + ADP. It participates in pyrimidine metabolism; CTP biosynthesis via de novo pathway; UDP from UMP (UMPK route): step 1/1. Its activity is regulated as follows. Inhibited by UTP. Catalyzes the reversible phosphorylation of UMP to UDP. The protein is Uridylate kinase of Chlamydia trachomatis serovar A (strain ATCC VR-571B / DSM 19440 / HAR-13).